A 156-amino-acid chain; its full sequence is ATP synthase subunit b (156 aa).

A helical transmembrane segment spans residues 7–27; sequence LIGQLIAFAIFVWFCMKYVWP.

It belongs to the ATPase B chain family. In terms of assembly, F-type ATPases have 2 components, F(1) - the catalytic core - and F(0) - the membrane proton channel. F(1) has five subunits: alpha(3), beta(3), gamma(1), delta(1), epsilon(1). F(0) has three main subunits: a(1), b(2) and c(10-14). The alpha and beta chains form an alternating ring which encloses part of the gamma chain. F(1) is attached to F(0) by a central stalk formed by the gamma and epsilon chains, while a peripheral stalk is formed by the delta and b chains.

Its subcellular location is the cell inner membrane. Functionally, f(1)F(0) ATP synthase produces ATP from ADP in the presence of a proton or sodium gradient. F-type ATPases consist of two structural domains, F(1) containing the extramembraneous catalytic core and F(0) containing the membrane proton channel, linked together by a central stalk and a peripheral stalk. During catalysis, ATP synthesis in the catalytic domain of F(1) is coupled via a rotary mechanism of the central stalk subunits to proton translocation. Its function is as follows. Component of the F(0) channel, it forms part of the peripheral stalk, linking F(1) to F(0). This is ATP synthase subunit b from Histophilus somni (strain 129Pt) (Haemophilus somnus).